Consider the following 215-residue polypeptide: UPF0502 protein Gbem_0102 (215 aa).

Belongs to the UPF0502 family.

In Citrifermentans bemidjiense (strain ATCC BAA-1014 / DSM 16622 / JCM 12645 / Bem) (Geobacter bemidjiensis), this protein is UPF0502 protein Gbem_0102.